Here is a 264-residue protein sequence, read N- to C-terminus: 3-methyl-2-oxobutanoate hydroxymethyltransferase (264 aa).

2 residues coordinate Mg(2+): aspartate 45 and aspartate 84. 3-methyl-2-oxobutanoate-binding positions include 45–46 (DS), aspartate 84, and lysine 112. Glutamate 114 is a binding site for Mg(2+). The active-site Proton acceptor is the glutamate 181.

It belongs to the PanB family. As to quaternary structure, homodecamer; pentamer of dimers. Mg(2+) serves as cofactor.

Its subcellular location is the cytoplasm. It carries out the reaction 3-methyl-2-oxobutanoate + (6R)-5,10-methylene-5,6,7,8-tetrahydrofolate + H2O = 2-dehydropantoate + (6S)-5,6,7,8-tetrahydrofolate. The protein operates within cofactor biosynthesis; (R)-pantothenate biosynthesis; (R)-pantoate from 3-methyl-2-oxobutanoate: step 1/2. Catalyzes the reversible reaction in which hydroxymethyl group from 5,10-methylenetetrahydrofolate is transferred onto alpha-ketoisovalerate to form ketopantoate. The chain is 3-methyl-2-oxobutanoate hydroxymethyltransferase from Escherichia coli O17:K52:H18 (strain UMN026 / ExPEC).